The chain runs to 196 residues: Ribonuclease HII (196 aa).

The RNase H type-2 domain maps to 15 to 196 (YIVAGIDEAG…RKSFRYSCFI (182 aa)). A divalent metal cation-binding residues include aspartate 21, glutamate 22, and aspartate 112.

It belongs to the RNase HII family. Requires Mn(2+) as cofactor. It depends on Mg(2+) as a cofactor.

The protein resides in the cytoplasm. The enzyme catalyses Endonucleolytic cleavage to 5'-phosphomonoester.. In terms of biological role, endonuclease that specifically degrades the RNA of RNA-DNA hybrids. The polypeptide is Ribonuclease HII (Rickettsia canadensis (strain McKiel)).